Consider the following 95-residue polypeptide: Aspartyl/glutamyl-tRNA(Asn/Gln) amidotransferase subunit C (95 aa).

This sequence belongs to the GatC family. As to quaternary structure, heterotrimer of A, B and C subunits.

It carries out the reaction L-glutamyl-tRNA(Gln) + L-glutamine + ATP + H2O = L-glutaminyl-tRNA(Gln) + L-glutamate + ADP + phosphate + H(+). It catalyses the reaction L-aspartyl-tRNA(Asn) + L-glutamine + ATP + H2O = L-asparaginyl-tRNA(Asn) + L-glutamate + ADP + phosphate + 2 H(+). In terms of biological role, allows the formation of correctly charged Asn-tRNA(Asn) or Gln-tRNA(Gln) through the transamidation of misacylated Asp-tRNA(Asn) or Glu-tRNA(Gln) in organisms which lack either or both of asparaginyl-tRNA or glutaminyl-tRNA synthetases. The reaction takes place in the presence of glutamine and ATP through an activated phospho-Asp-tRNA(Asn) or phospho-Glu-tRNA(Gln). The sequence is that of Aspartyl/glutamyl-tRNA(Asn/Gln) amidotransferase subunit C from Clostridium botulinum (strain ATCC 19397 / Type A).